Here is a 128-residue protein sequence, read N- to C-terminus: DELTA-urthionin-Uf1a (128 aa).

The N-terminal stretch at 1–24 (MEGKTVIVSLLLLSIVVGQIQVEA) is a signal peptide. 3 disulfides stabilise this stretch: Cys27/Cys64, Cys28/Cys56, and Cys40/Cys50. The propeptide at 67–128 (LSIPEVTGEA…LCTKNSIETA (62 aa)) is acidic domain.

Belongs to the plant thionin (TC 1.C.44) family. Expressed in trichomes, that are stiff epidermal hairs located on the surface of petioles and leaves.

It localises to the secreted. In terms of biological role, plant defense protein that causes pain by probable disruption of cell membranes. Shows cytotoxic activity against the neuroblastoma cell line SH-SY5Y and slightly weaker activity against several non-neuronal cell lines. In vivo, intraplantar injection into mice causes several nocifensive responses, along with swelling and redness. The protein is DELTA-urthionin-Uf1a of Urtica ferox (Tree nettle).